We begin with the raw amino-acid sequence, 527 residues long: Glucose-6-phosphate isomerase (527 aa).

Glu-347 acts as the Proton donor in catalysis. Residues His-378 and Lys-493 contribute to the active site.

It belongs to the GPI family.

It localises to the cytoplasm. It catalyses the reaction alpha-D-glucose 6-phosphate = beta-D-fructose 6-phosphate. It participates in carbohydrate biosynthesis; gluconeogenesis. Its pathway is carbohydrate degradation; glycolysis; D-glyceraldehyde 3-phosphate and glycerone phosphate from D-glucose: step 2/4. Catalyzes the reversible isomerization of glucose-6-phosphate to fructose-6-phosphate. This Chlamydia caviae (strain ATCC VR-813 / DSM 19441 / 03DC25 / GPIC) (Chlamydophila caviae) protein is Glucose-6-phosphate isomerase.